The primary structure comprises 141 residues: Large ribosomal subunit protein uL11 (141 aa).

The protein belongs to the universal ribosomal protein uL11 family. As to quaternary structure, part of the ribosomal stalk of the 50S ribosomal subunit. Interacts with L10 and the large rRNA to form the base of the stalk. L10 forms an elongated spine to which L12 dimers bind in a sequential fashion forming a multimeric L10(L12)X complex. Post-translationally, one or more lysine residues are methylated.

Functionally, forms part of the ribosomal stalk which helps the ribosome interact with GTP-bound translation factors. The protein is Large ribosomal subunit protein uL11 of Cyanothece sp. (strain PCC 7425 / ATCC 29141).